The sequence spans 63 residues: Conotoxin Vi5.1a (63 aa).

The signal sequence occupies residues 1–22; that stretch reads MRCVPVFIILLLLIPSAPSADA. The propeptide occupies 23 to 50; it reads QPKTKDDVPLASYHDNAERTLQRLWNQR. Proline 62 carries the proline amide modification.

The protein belongs to the conotoxin T superfamily. In terms of processing, contains 2 disulfide bonds that can be either 'C1-C3, C2-C4' or 'C1-C4, C2-C3', since these disulfide connectivities have been observed for conotoxins with cysteine framework V (for examples, see AC P0DQQ7 and AC P81755). As to expression, expressed by the venom duct.

Its subcellular location is the secreted. The sequence is that of Conotoxin Vi5.1a from Conus virgo (Virgin cone).